A 341-amino-acid chain; its full sequence is Aspartate carbamoyltransferase catalytic subunit (341 aa).

Carbamoyl phosphate-binding residues include Arg74 and Thr75. Lys102 is a binding site for L-aspartate. Carbamoyl phosphate-binding residues include Arg124, His152, and Gln155. The L-aspartate site is built by Arg190 and Arg244. Carbamoyl phosphate-binding residues include Gly285 and Pro286.

The protein belongs to the aspartate/ornithine carbamoyltransferase superfamily. ATCase family. Heterododecamer (2C3:3R2) of six catalytic PyrB chains organized as two trimers (C3), and six regulatory PyrI chains organized as three dimers (R2).

The catalysed reaction is carbamoyl phosphate + L-aspartate = N-carbamoyl-L-aspartate + phosphate + H(+). It functions in the pathway pyrimidine metabolism; UMP biosynthesis via de novo pathway; (S)-dihydroorotate from bicarbonate: step 2/3. Functionally, catalyzes the condensation of carbamoyl phosphate and aspartate to form carbamoyl aspartate and inorganic phosphate, the committed step in the de novo pyrimidine nucleotide biosynthesis pathway. In Novosphingobium aromaticivorans (strain ATCC 700278 / DSM 12444 / CCUG 56034 / CIP 105152 / NBRC 16084 / F199), this protein is Aspartate carbamoyltransferase catalytic subunit.